The primary structure comprises 422 residues: Charged multivesicular body protein 7 (422 aa).

Residues 234 to 304 (KLLSERLQSA…ERISAAETDR (71 aa)) are a coiled coil. Positions 394-422 (RPTEWKMDQAAHSPADGSFLRSVPEPMLQ) are disordered.

It belongs to the SNF7 family.

It is found in the cytoplasm. Its subcellular location is the nucleus envelope. Functionally, ESCRT-III-like protein required to recruit the ESCRT-III complex to the nuclear envelope during late anaphase. Together with SPAST, the ESCRT-III complex promotes nuclear envelope sealing and mitotic spindle disassembly during late anaphase. Plays a role in the endosomal sorting pathway. This chain is Charged multivesicular body protein 7 (chmp7), found in Xenopus laevis (African clawed frog).